Reading from the N-terminus, the 275-residue chain is Ciliary microtubule inner protein 2B (275 aa).

2 disordered regions span residues 62 to 84 and 125 to 169; these read PPIR…RGQE and EKQG…SPYS. Composition is skewed to basic and acidic residues over residues 71 to 84 and 125 to 147; these read EVPR…RGQE and EKQG…KDQV.

It belongs to the CIMIP2 family. In terms of assembly, microtubule inner protein component of sperm flagellar doublet microtubules. In terms of tissue distribution, expressed in airway epithelial cells.

The protein resides in the cytoplasm. The protein localises to the cytoskeleton. It is found in the cilium axoneme. It localises to the flagellum axoneme. Its function is as follows. Microtubule inner protein (MIP) part of the dynein-decorated doublet microtubules (DMTs) in cilia axoneme, which is required for motile cilia beating. In Homo sapiens (Human), this protein is Ciliary microtubule inner protein 2B.